Here is a 240-residue protein sequence, read N- to C-terminus: UDP-2,3-diacylglucosamine hydrolase (240 aa).

Mn(2+) contacts are provided by Asp-8, His-10, Asp-41, Asn-79, and His-114. Position 79 to 80 (79 to 80 (NR)) interacts with substrate. Substrate is bound by residues Asp-122, Ser-160, Thr-164, Lys-167, and His-195. His-195 and His-197 together coordinate Mn(2+).

The protein belongs to the LpxH family. It depends on Mn(2+) as a cofactor.

It localises to the cell inner membrane. It catalyses the reaction UDP-2-N,3-O-bis[(3R)-3-hydroxytetradecanoyl]-alpha-D-glucosamine + H2O = 2-N,3-O-bis[(3R)-3-hydroxytetradecanoyl]-alpha-D-glucosaminyl 1-phosphate + UMP + 2 H(+). It participates in glycolipid biosynthesis; lipid IV(A) biosynthesis; lipid IV(A) from (3R)-3-hydroxytetradecanoyl-[acyl-carrier-protein] and UDP-N-acetyl-alpha-D-glucosamine: step 4/6. Functionally, hydrolyzes the pyrophosphate bond of UDP-2,3-diacylglucosamine to yield 2,3-diacylglucosamine 1-phosphate (lipid X) and UMP by catalyzing the attack of water at the alpha-P atom. Involved in the biosynthesis of lipid A, a phosphorylated glycolipid that anchors the lipopolysaccharide to the outer membrane of the cell. The polypeptide is UDP-2,3-diacylglucosamine hydrolase (Pseudomonas paraeruginosa (strain DSM 24068 / PA7) (Pseudomonas aeruginosa (strain PA7))).